The following is a 151-amino-acid chain: UPF0178 protein Sde_3033 (151 aa).

This sequence belongs to the UPF0178 family.

The sequence is that of UPF0178 protein Sde_3033 from Saccharophagus degradans (strain 2-40 / ATCC 43961 / DSM 17024).